A 128-amino-acid polypeptide reads, in one-letter code: Small ribosomal subunit protein bS6 (128 aa).

A disordered region spans residues 100 to 128 (SPMAKAKEERFTRRDDERREEATEAASEE). Positions 104 to 121 (KAKEERFTRRDDERREEA) are enriched in basic and acidic residues.

The protein belongs to the bacterial ribosomal protein bS6 family.

Functionally, binds together with bS18 to 16S ribosomal RNA. The protein is Small ribosomal subunit protein bS6 of Aeromonas hydrophila subsp. hydrophila (strain ATCC 7966 / DSM 30187 / BCRC 13018 / CCUG 14551 / JCM 1027 / KCTC 2358 / NCIMB 9240 / NCTC 8049).